The primary structure comprises 190 residues: uncharacterized protein (190 aa).

Over 1–16 (MAILPEFISQTPPVTR) the chain is Cytoplasmic. Residues 17–37 (YIVLGTLFTTLAVNFGYVSDL) traverse the membrane as a helical segment. Residues 38–55 (KIFFNWKLFLAKGEYWRA) lie on the Lumenal side of the membrane. A helical membrane pass occupies residues 56 to 76 (ITTFLYVGPFGLELILYLSFL). Topologically, residues 77–98 (LRFMSMLERSSPPPQTQSFLKT) are cytoplasmic. Residues 99-119 (VLIVWFSLLVTSYFSYMPFAA) form a helical membrane-spanning segment. Residues 120–138 (SYFSFTMLYIWSWKHPLYR) are Lumenal-facing. Residues 139–159 (ISILGLFDVKAPYVPWVMVLL) form a helical membrane-spanning segment. At 160–163 (RWLR) the chain is on the cytoplasmic side. Residues 164 to 184 (TGIFPLLDLISALIGHVYFFV) traverse the membrane as a helical segment. Residues 185-190 (TDFSTV) are Lumenal-facing.

Belongs to the derlin family.

Its subcellular location is the endoplasmic reticulum membrane. This is an uncharacterized protein from Schizosaccharomyces pombe (strain 972 / ATCC 24843) (Fission yeast).